A 185-amino-acid polypeptide reads, in one-letter code: Vomeronasal secretory protein 2 (185 aa).

The N-terminal stretch at Met-1 to Thr-19 is a signal peptide. A disulfide bridge connects residues Cys-80 and Cys-172.

It belongs to the calycin superfamily. Lipocalin family. Specifically expressed in vomeronasal and posterior glands of the nasal septum, the ducts of which open into the lumen of the vomeronasal organ.

Its subcellular location is the secreted. Functionally, transport of lipophilic molecules, possible pheromone-carrier. The chain is Vomeronasal secretory protein 2 (Lcn4) from Mus musculus (Mouse).